The following is a 390-amino-acid chain: Transforming growth factor beta-1 proprotein (390 aa).

The first 29 residues, 1–29 (MPPSGLRLLPLLLPLLWLLVLTPGRPAAG), serve as a signal peptide directing secretion. A straightjacket domain region spans residues 30–74 (LSTCKTIDMELVKRKRIEAIRGQILSKLRLASPPSQGEVPPGPLP). The segment at 75–271 (EAVLALYNST…ATPLERAQQL (197 aa)) is arm domain. N-linked (GlcNAc...) asparagine glycans are attached at residues asparagine 82, asparagine 136, and asparagine 176. Positions 226–252 (DSKDNTLRVGINGFSSSRRGDLATIDG) are bowtie tail. The short motif at 244–246 (RGD) is the Cell attachment site element. Cystine bridges form between cysteine 285–cysteine 294, cysteine 293–cysteine 356, cysteine 322–cysteine 387, and cysteine 326–cysteine 389.

This sequence belongs to the TGF-beta family. In terms of assembly, homodimer; disulfide-linked. Interacts with the serine proteases, HTRA1 and HTRA3: the interaction with either inhibits TGFB1-mediated signaling and the HTRA protease activity is required for this inhibition. May interact with THSD4; this interaction may lead to sequestration by FBN1 microfibril assembly and attenuation of TGFB signaling. Interacts with CD109, DPT and ASPN. Interacts with EFEMP2. Interacts with TSKU; the interaction contributes to regulation of the hair cycle. Interacts with TGFBR3. Homodimer; disulfide-linked. Interacts with transforming growth factor beta-1 (TGF-beta-1) chain; interaction is non-covalent and maintains TGF-beta-1 in a latent state; each latency-associated peptide (LAP) monomer interacts with TGF-beta-1 in the other monomer. Interacts with LTBP1; leading to regulation of TGF-beta-1 activation. Interacts with LRRC32/GARP; leading to regulation of TGF-beta-1 activation on the surface of activated regulatory T-cells (Tregs). Interacts with LRRC33/NRROS; leading to regulation of TGF-beta-1 activation in macrophages and microglia. Interacts (via cell attachment site) with integrins ITGAV and ITGB6 (ITGAV:ITGB6), leading to release of the active TGF-beta-1. Latency-associated peptide: Interacts with NREP; the interaction results in a decrease in TGFB1 autoinduction. Interacts with HSP90AB1; inhibits latent TGFB1 activation. As to quaternary structure, homodimer; disulfide-linked. Interacts with TGF-beta receptors (TGFBR1 and TGFBR2), leading to signal transduction. Transforming growth factor beta-1 proprotein: The precursor proprotein is cleaved in the Golgi apparatus by FURIN to form Transforming growth factor beta-1 (TGF-beta-1) and Latency-associated peptide (LAP) chains, which remain non-covalently linked, rendering TGF-beta-1 inactive. In terms of processing, N-glycosylated. Deglycosylation leads to activation of Transforming growth factor beta-1 (TGF-beta-1); mechanisms triggering deglycosylation-driven activation of TGF-beta-1 are however unclear.

Its subcellular location is the secreted. The protein localises to the extracellular space. The protein resides in the extracellular matrix. In terms of biological role, transforming growth factor beta-1 proprotein: Precursor of the Latency-associated peptide (LAP) and Transforming growth factor beta-1 (TGF-beta-1) chains, which constitute the regulatory and active subunit of TGF-beta-1, respectively. Functionally, required to maintain the Transforming growth factor beta-1 (TGF-beta-1) chain in a latent state during storage in extracellular matrix. Associates non-covalently with TGF-beta-1 and regulates its activation via interaction with 'milieu molecules', such as LTBP1, LRRC32/GARP and LRRC33/NRROS, that control activation of TGF-beta-1. Interaction with LRRC33/NRROS regulates activation of TGF-beta-1 in macrophages and microglia. Interaction with LRRC32/GARP controls activation of TGF-beta-1 on the surface of activated regulatory T-cells (Tregs). Interaction with integrins (ITGAV:ITGB6 or ITGAV:ITGB8) results in distortion of the Latency-associated peptide chain and subsequent release of the active TGF-beta-1. Its function is as follows. Multifunctional protein that regulates the growth and differentiation of various cell types and is involved in various processes, such as normal development, immune function, microglia function and responses to neurodegeneration. Activation into mature form follows different steps: following cleavage of the proprotein in the Golgi apparatus, Latency-associated peptide (LAP) and Transforming growth factor beta-1 (TGF-beta-1) chains remain non-covalently linked rendering TGF-beta-1 inactive during storage in extracellular matrix. At the same time, LAP chain interacts with 'milieu molecules', such as LTBP1, LRRC32/GARP and LRRC33/NRROS that control activation of TGF-beta-1 and maintain it in a latent state during storage in extracellular milieus. TGF-beta-1 is released from LAP by integrins (ITGAV:ITGB6 or ITGAV:ITGB8): integrin-binding to LAP stabilizes an alternative conformation of the LAP bowtie tail and results in distortion of the LAP chain and subsequent release of the active TGF-beta-1. Once activated following release of LAP, TGF-beta-1 acts by binding to TGF-beta receptors (TGFBR1 and TGFBR2), which transduce signal. While expressed by many cells types, TGF-beta-1 only has a very localized range of action within cell environment thanks to fine regulation of its activation by Latency-associated peptide chain (LAP) and 'milieu molecules'. Plays an important role in bone remodeling: acts as a potent stimulator of osteoblastic bone formation, causing chemotaxis, proliferation and differentiation in committed osteoblasts. Can promote either T-helper 17 cells (Th17) or regulatory T-cells (Treg) lineage differentiation in a concentration-dependent manner. At high concentrations, leads to FOXP3-mediated suppression of RORC and down-regulation of IL-17 expression, favoring Treg cell development. At low concentrations in concert with IL-6 and IL-21, leads to expression of the IL-17 and IL-23 receptors, favoring differentiation to Th17 cells. Stimulates sustained production of collagen through the activation of CREB3L1 by regulated intramembrane proteolysis (RIP). Mediates SMAD2/3 activation by inducing its phosphorylation and subsequent translocation to the nucleus. Positively regulates odontoblastic differentiation in dental papilla cells, via promotion of IPO7-mediated translocation of phosphorylated SMAD2 to the nucleus and subsequent transcription of target genes. Can induce epithelial-to-mesenchymal transition (EMT) and cell migration in various cell types. This Equus caballus (Horse) protein is Transforming growth factor beta-1 proprotein (TGFB1).